A 363-amino-acid polypeptide reads, in one-letter code: Putative lipoate-protein ligase A (363 aa).

The BPL/LPL catalytic domain maps to 49–229 (STAKHCLLLY…CFLLHKSHST (181 aa)). Residues arginine 91, 96-99 (GTVF), and lysine 152 each bind ATP. Lysine 152 serves as a coordination point for (R)-lipoate.

It belongs to the LplA family. Monomer.

It is found in the cytoplasm. The catalysed reaction is L-lysyl-[lipoyl-carrier protein] + (R)-lipoate + ATP = N(6)-[(R)-lipoyl]-L-lysyl-[lipoyl-carrier protein] + AMP + diphosphate + H(+). Its pathway is protein modification; protein lipoylation via exogenous pathway; protein N(6)-(lipoyl)lysine from lipoate: step 1/2. The protein operates within protein modification; protein lipoylation via exogenous pathway; protein N(6)-(lipoyl)lysine from lipoate: step 2/2. Functionally, catalyzes both the ATP-dependent activation of exogenously supplied lipoate to lipoyl-AMP and the transfer of the activated lipoyl onto the lipoyl domains of lipoate-dependent enzymes. This is Putative lipoate-protein ligase A (aim22) from Schizosaccharomyces pombe (strain 972 / ATCC 24843) (Fission yeast).